The sequence spans 462 residues: Argininosuccinate lyase (462 aa).

Belongs to the lyase 1 family. Argininosuccinate lyase subfamily.

Its subcellular location is the cytoplasm. The enzyme catalyses 2-(N(omega)-L-arginino)succinate = fumarate + L-arginine. It functions in the pathway amino-acid biosynthesis; L-arginine biosynthesis; L-arginine from L-ornithine and carbamoyl phosphate: step 3/3. In Prochlorococcus marinus (strain MIT 9211), this protein is Argininosuccinate lyase.